The following is a 366-amino-acid chain: MSSNVQDIRGWPPPFANAAYQPDASSRRARYGGLQVHNLRQATTANSLVPSIIQGLRAEDRELPSLLLWDDQGLSLFNAILDSPEYYLANKEWALLHNEVHNIVASISSGDRLVELGAGNMKKTALILHTLQSQRKYIHYIACDVDRVALQRGLRNLQAIFPASTSSIKIQGLVATYEDCAAWLQRNPGSGHTSLMWLGNSLANFPPPEASEYIRSFLSTGASLILALDGCQDHEQIARAYEGPSNQKFVLNGLRHANDVLGTDAFDVRNWSFLGRWNPELWMHESFYAAKRDLTLKIGRETFVFRKGETIRSIRSGKWPKPKVVDICREAGGDVVDWWMNPDESYGKSTTLMGYLARVLIDSVSD.

A signal peptide spans 1-18 (MSSNVQDIRGWPPPFANA). Asparagine 270 carries an N-linked (GlcNAc...) asparagine glycan.

It belongs to the methyltransferase superfamily.

It participates in secondary metabolite biosynthesis. N-methyltransferase; part of the gene cluster that mediates the biosynthesis of the isoquinoline alkaloids fumisoquin A, fumisoquin B and fumisoquin C; as well as small amounts of fumipyrrole as a shunt metabolite. The products of the cluster lead to a brown coloration and are important for growth and conidiation. The nonribosomal peptide synthetase-like protein fsqF, which lacks a canonical condensation domain, is required for addition of a serine-derived dehydroalanine moiety to activated tyrosine but is not essential for the subsequent steps leading to isoquinoline formation. A different enzyme, most likely the ATP-grasp enzyme fsqD, is responsible for activation of tyrosine. Three additional enzymes encoded by the fsq cluster, the N-methyltransferase fsqC, the phenol 2-monooxygenase fsqG and the FAD-dependent oxidase fsqB, catalyze the formation of the isoquinoline ring system in the fumisoquins. FsqB converts the fspF thiolation domain-bound (2S,4S,5S)-2-amino-6-(3,4-dihydroxyphenyl)-4-hydroxy-5-(methylamino)hexanoyl into isoquinoline. The cyclization most likely proceeds via a two-step mechanism, beginning with FAD-dependent oxidation of the methyl group to an iminium species followed by electrophilic attack on the deprotonated phenol. This chain is N-methyltransferase fsqC, found in Aspergillus fumigatus (strain ATCC MYA-4609 / CBS 101355 / FGSC A1100 / Af293) (Neosartorya fumigata).